A 187-amino-acid chain; its full sequence is Large ribosomal subunit protein uL22A (187 aa).

It belongs to the universal ribosomal protein uL22 family. In terms of assembly, component of the large ribosomal subunit (LSU). Mature yeast ribosomes consist of a small (40S) and a large (60S) subunit. The 40S small subunit contains 1 molecule of ribosomal RNA (18S rRNA) and at least 33 different proteins. The large 60S subunit contains 3 rRNA molecules (25S, 5.8S and 5S rRNA) and at least 46 different proteins. uL22 is associated with the polypeptide exit tunnel.

Its subcellular location is the cytoplasm. Its function is as follows. Component of the ribosome, a large ribonucleoprotein complex responsible for the synthesis of proteins in the cell. The small ribosomal subunit (SSU) binds messenger RNAs (mRNAs) and translates the encoded message by selecting cognate aminoacyl-transfer RNA (tRNA) molecules. The large subunit (LSU) contains the ribosomal catalytic site termed the peptidyl transferase center (PTC), which catalyzes the formation of peptide bonds, thereby polymerizing the amino acids delivered by tRNAs into a polypeptide chain. The nascent polypeptides leave the ribosome through a tunnel in the LSU and interact with protein factors that function in enzymatic processing, targeting, and the membrane insertion of nascent chains at the exit of the ribosomal tunnel. The polypeptide is Large ribosomal subunit protein uL22A (rpl1701) (Schizosaccharomyces pombe (strain 972 / ATCC 24843) (Fission yeast)).